A 185-amino-acid polypeptide reads, in one-letter code: Putative manganese efflux pump MntP (185 aa).

Helical transmembrane passes span 4–24, 40–60, 64–84, 108–128, 134–154, and 165–185; these read LFIG…TDAF, IFHI…AGMA, LLSG…LFIL, LLLF…SLGM, FLAV…GLLA, and YSEA…LLPV.

The protein belongs to the MntP (TC 9.B.29) family.

Its subcellular location is the cell membrane. In terms of biological role, probably functions as a manganese efflux pump. In Bacillus velezensis (strain DSM 23117 / BGSC 10A6 / LMG 26770 / FZB42) (Bacillus amyloliquefaciens subsp. plantarum), this protein is Putative manganese efflux pump MntP.